The sequence spans 434 residues: Tol-Pal system protein TolB (434 aa).

A signal peptide spans 1–21; sequence MTVRRALALAALALAVSPALA. Residues 411–434 are disordered; that stretch reads GDRQTPVTSGKTDLAAPAWGPLAP.

The protein belongs to the TolB family. As to quaternary structure, the Tol-Pal system is composed of five core proteins: the inner membrane proteins TolA, TolQ and TolR, the periplasmic protein TolB and the outer membrane protein Pal. They form a network linking the inner and outer membranes and the peptidoglycan layer.

It is found in the periplasm. In terms of biological role, part of the Tol-Pal system, which plays a role in outer membrane invagination during cell division and is important for maintaining outer membrane integrity. This is Tol-Pal system protein TolB from Anaeromyxobacter dehalogenans (strain 2CP-1 / ATCC BAA-258).